The sequence spans 182 residues: Ribosome-recycling factor (182 aa).

It belongs to the RRF family.

The protein localises to the cytoplasm. Responsible for the release of ribosomes from messenger RNA at the termination of protein biosynthesis. May increase the efficiency of translation by recycling ribosomes from one round of translation to another. This chain is Ribosome-recycling factor, found in Gloeothece citriformis (strain PCC 7424) (Cyanothece sp. (strain PCC 7424)).